The primary structure comprises 345 residues: Protein RecA (345 aa).

Glycine 66–threonine 73 is a binding site for ATP.

The protein belongs to the RecA family.

It is found in the cytoplasm. Functionally, can catalyze the hydrolysis of ATP in the presence of single-stranded DNA, the ATP-dependent uptake of single-stranded DNA by duplex DNA, and the ATP-dependent hybridization of homologous single-stranded DNAs. It interacts with LexA causing its activation and leading to its autocatalytic cleavage. The protein is Protein RecA of Acidithiobacillus ferrooxidans (strain ATCC 23270 / DSM 14882 / CIP 104768 / NCIMB 8455) (Ferrobacillus ferrooxidans (strain ATCC 23270)).